A 583-amino-acid polypeptide reads, in one-letter code: ATP-dependent lipid A-core flippase (583 aa).

6 helical membrane-spanning segments follow: residues 32–52, 71–91, 115–135, 160–180, 259–279, and 286–306; these read VAFLISIIALVTFSATNTGFL, LHLLPFMLFGLLAIRALAGFI, LMSLPVSFFDAVSAGVVTSKL, ILGMVGYMLYLDWQLTLIFAV, SMVVELLAGVALALVVFYAVG, and FAAFIGALLMLIGPVKTLTSL. An ABC transmembrane type-1 domain is found at 34–312; sequence FLISIIALVT…LTSLNEELQV (279 aa). The region spanning 344 to 580 is the ABC transporter domain; sequence IVFENVTLQY…DGHYAKLYRK (237 aa). 378–385 serves as a coordination point for ATP; that stretch reads GRSGGGKT.

This sequence belongs to the ABC transporter superfamily. Lipid exporter (TC 3.A.1.106) family. Homodimer.

Its subcellular location is the cell inner membrane. The catalysed reaction is ATP + H2O + lipid A-core oligosaccharideSide 1 = ADP + phosphate + lipid A-core oligosaccharideSide 2.. In terms of biological role, involved in lipopolysaccharide (LPS) biosynthesis. Translocates lipid A-core from the inner to the outer leaflet of the inner membrane. Transmembrane domains (TMD) form a pore in the inner membrane and the ATP-binding domain (NBD) is responsible for energy generation. The polypeptide is ATP-dependent lipid A-core flippase (Methylobacillus flagellatus (strain ATCC 51484 / DSM 6875 / VKM B-1610 / KT)).